The sequence spans 457 residues: Argininosuccinate lyase (457 aa).

Belongs to the lyase 1 family. Argininosuccinate lyase subfamily.

The protein localises to the cytoplasm. The catalysed reaction is 2-(N(omega)-L-arginino)succinate = fumarate + L-arginine. It participates in amino-acid biosynthesis; L-arginine biosynthesis; L-arginine from L-ornithine and carbamoyl phosphate: step 3/3. The sequence is that of Argininosuccinate lyase from Exiguobacterium sibiricum (strain DSM 17290 / CCUG 55495 / CIP 109462 / JCM 13490 / 255-15).